Consider the following 334-residue polypeptide: GTP 3',8-cyclase (334 aa).

Residues 13-239 (KFHRKFYYLR…KVRSHHDGPA (227 aa)) enclose the Radical SAM core domain. Arginine 22 serves as a coordination point for GTP. [4Fe-4S] cluster is bound by residues cysteine 29 and cysteine 33. S-adenosyl-L-methionine is bound at residue tyrosine 35. A [4Fe-4S] cluster-binding site is contributed by cysteine 36. A GTP-binding site is contributed by arginine 73. Glycine 77 is an S-adenosyl-L-methionine binding site. Residue threonine 104 coordinates GTP. Serine 128 serves as a coordination point for S-adenosyl-L-methionine. Lysine 165 lines the GTP pocket. S-adenosyl-L-methionine is bound at residue methionine 199. Positions 262 and 265 each coordinate [4Fe-4S] cluster. 267-269 (RLR) is a GTP binding site. Cysteine 279 is a [4Fe-4S] cluster binding site.

This sequence belongs to the radical SAM superfamily. MoaA family. In terms of assembly, monomer and homodimer. The cofactor is [4Fe-4S] cluster.

It catalyses the reaction GTP + AH2 + S-adenosyl-L-methionine = (8S)-3',8-cyclo-7,8-dihydroguanosine 5'-triphosphate + 5'-deoxyadenosine + L-methionine + A + H(+). It functions in the pathway cofactor biosynthesis; molybdopterin biosynthesis. Its function is as follows. Catalyzes the cyclization of GTP to (8S)-3',8-cyclo-7,8-dihydroguanosine 5'-triphosphate. This is GTP 3',8-cyclase from Vibrio parahaemolyticus serotype O3:K6 (strain RIMD 2210633).